The chain runs to 321 residues: Cytochrome f (321 aa).

The signal sequence occupies residues 1–38 (MINLFLLKYKTAFSTFLKPFAYLSLILSVCFYSIQAQA). The heme site is built by F39, C59, C62, and H63. A helical transmembrane segment spans residues 287–306 (VKGLIAFFFTVILAQILLVL).

This sequence belongs to the cytochrome f family. The 4 large subunits of the cytochrome b6-f complex are cytochrome b6, subunit IV (17 kDa polypeptide, petD), cytochrome f and the Rieske protein, while the 4 small subunits are PetG, PetL, PetM and PetN. The complex functions as a dimer. Requires heme as cofactor.

Its subcellular location is the plastid. The protein localises to the chloroplast thylakoid membrane. Functionally, component of the cytochrome b6-f complex, which mediates electron transfer between photosystem II (PSII) and photosystem I (PSI), cyclic electron flow around PSI, and state transitions. The protein is Cytochrome f (petA) of Guillardia theta (Cryptophyte).